A 213-amino-acid polypeptide reads, in one-letter code: MLTIILLLIASYLLGAIPFGLWIGKIFFKKNLHDYGSGNTGTTNTFRILGVKAGISVFAFDLLKGTLATLLPLFFHINGVSPLIFGLLAVIGHTFSIFDRFKGGKAVATSAGVILGFSPLFLIYLLVVFIIVLWLFSMISLSSVIGAVFALLGILIFPSIGFILTSYDLLFSIIIFVLAIIIILRHRTNLKRIKNHCESLVPFGLNLSKQKEK.

6 helical membrane-spanning segments follow: residues 4 to 24, 48 to 68, 71 to 91, 113 to 133, 144 to 164, and 165 to 185; these read IILL…LWIG, ILGV…GTLA, LPLF…LAVI, VILG…IIVL, VIGA…GFIL, and TSYD…IILR.

This sequence belongs to the PlsY family. In terms of assembly, probably interacts with PlsX.

It is found in the cell membrane. The enzyme catalyses an acyl phosphate + sn-glycerol 3-phosphate = a 1-acyl-sn-glycero-3-phosphate + phosphate. The protein operates within lipid metabolism; phospholipid metabolism. Its function is as follows. Catalyzes the transfer of an acyl group from acyl-phosphate (acyl-PO(4)) to glycerol-3-phosphate (G3P) to form lysophosphatidic acid (LPA). This enzyme utilizes acyl-phosphate as fatty acyl donor, but not acyl-CoA or acyl-ACP. The protein is Glycerol-3-phosphate acyltransferase of Lactococcus lactis subsp. lactis (strain IL1403) (Streptococcus lactis).